The chain runs to 278 residues: MQAAQGEGWHDAQLDFSKSMSYGDYLALDQILNAQHPRSPDHNEMLFIVQHQTTELWMKLMLHELRAARDCVRNDNLPPAFKMLARVSRIMDQLVQAWNVLATMTPPEYSAMRPHLGQSSGFQSYQYREIEFILGNKNAAMLKPHAHRTEHYEQVKAALETPSLYDEAVRYMARHGFAFDADCIERDWSRPVTYNASVEAAWLEVYRDPTHHWELYELAEKFVDLEDAFRQWRFRHVTTVERVIGFKRGTGGTEGVGYLRKMLDVVLFPELWKLRTDL.

Substrate contacts are provided by residues 47-51, Tyr109, and Arg113; that span reads FIVQH. Residue His236 coordinates heme. Thr250 lines the substrate pocket.

It belongs to the tryptophan 2,3-dioxygenase family. As to quaternary structure, homotetramer. The cofactor is heme.

The catalysed reaction is L-tryptophan + O2 = N-formyl-L-kynurenine. Its pathway is amino-acid degradation; L-tryptophan degradation via kynurenine pathway; L-kynurenine from L-tryptophan: step 1/2. Heme-dependent dioxygenase that catalyzes the oxidative cleavage of the L-tryptophan (L-Trp) pyrrole ring and converts L-tryptophan to N-formyl-L-kynurenine. Catalyzes the oxidative cleavage of the indole moiety. The protein is Tryptophan 2,3-dioxygenase of Ralstonia pickettii (strain 12J).